Here is a 367-residue protein sequence, read N- to C-terminus: Chorismate synthase (367 aa).

Residue Arg48 coordinates NADP(+). Residues 125-127 (RSS), 238-239 (NA), Gly278, 293-297 (KPTSS), and Arg319 contribute to the FMN site.

Belongs to the chorismate synthase family. Homotetramer. Requires FMNH2 as cofactor.

The catalysed reaction is 5-O-(1-carboxyvinyl)-3-phosphoshikimate = chorismate + phosphate. It participates in metabolic intermediate biosynthesis; chorismate biosynthesis; chorismate from D-erythrose 4-phosphate and phosphoenolpyruvate: step 7/7. Catalyzes the anti-1,4-elimination of the C-3 phosphate and the C-6 proR hydrogen from 5-enolpyruvylshikimate-3-phosphate (EPSP) to yield chorismate, which is the branch point compound that serves as the starting substrate for the three terminal pathways of aromatic amino acid biosynthesis. This reaction introduces a second double bond into the aromatic ring system. The protein is Chorismate synthase of Halorhodospira halophila (strain DSM 244 / SL1) (Ectothiorhodospira halophila (strain DSM 244 / SL1)).